A 209-amino-acid chain; its full sequence is Uracil phosphoribosyltransferase (209 aa).

5-phospho-alpha-D-ribose 1-diphosphate is bound by residues R79, R104, and 131-139 (DPMLATGGS). Residues I194 and 199 to 201 (GDA) contribute to the uracil site. Residue D200 participates in 5-phospho-alpha-D-ribose 1-diphosphate binding.

The protein belongs to the UPRTase family. Mg(2+) serves as cofactor.

It carries out the reaction UMP + diphosphate = 5-phospho-alpha-D-ribose 1-diphosphate + uracil. Its pathway is pyrimidine metabolism; UMP biosynthesis via salvage pathway; UMP from uracil: step 1/1. Allosterically activated by GTP. Its function is as follows. Catalyzes the conversion of uracil and 5-phospho-alpha-D-ribose 1-diphosphate (PRPP) to UMP and diphosphate. This chain is Uracil phosphoribosyltransferase, found in Anoxybacillus flavithermus (strain DSM 21510 / WK1).